The primary structure comprises 31 residues: Cyclotide psybry C (31 aa).

Residues 1–31 (GFNPCGETCQIDQTCHAPGCTCSIANICVRN) constitute a cross-link (cyclopeptide (Gly-Asn)). Cystine bridges form between cysteine 5–cysteine 20, cysteine 9–cysteine 22, and cysteine 15–cysteine 28.

This is a cyclic peptide.

Functionally, probably participates in a plant defense mechanism. This chain is Cyclotide psybry C, found in Psychotria brachyceras.